We begin with the raw amino-acid sequence, 176 residues long: Peptide methionine sulfoxide reductase MsrA (176 aa).

Cys-12 is a catalytic residue.

Belongs to the MsrA Met sulfoxide reductase family.

It carries out the reaction L-methionyl-[protein] + [thioredoxin]-disulfide + H2O = L-methionyl-(S)-S-oxide-[protein] + [thioredoxin]-dithiol. The catalysed reaction is [thioredoxin]-disulfide + L-methionine + H2O = L-methionine (S)-S-oxide + [thioredoxin]-dithiol. Its function is as follows. Has an important function as a repair enzyme for proteins that have been inactivated by oxidation. Catalyzes the reversible oxidation-reduction of methionine sulfoxide in proteins to methionine. This is Peptide methionine sulfoxide reductase MsrA from Thermus thermophilus (strain ATCC 27634 / DSM 579 / HB8).